The sequence spans 305 residues: MVLDGFAAHFDAYLENIVREGKSEHTVAAYRRDLEELFALLAQMPSEAEGGVPQGLSRRDFTAALRRLSQRGLNARTLARKLSSWRQYCVWLVERGLLHTDPTADIKPPKQPERVPKALPQEWLNRMLDLPVDGGDPLAVRDHALFELMYGSGLRVSEIHGLNADDVYLDEAWVHVTGKGRKQRQVPLTGKSVEALKNYLPLRQTASDGKALFTGRNGTRLSQRQIQKRLAQWAAQNGDGRHVSPHMMRHSYAGHLLQASRDIRAVQELLGHSSLSTTQIYTKLDFDHIARLYDEAHPRAKRQDE.

The Core-binding (CB) domain maps to 1 to 93 (MVLDGFAAHF…SWRQYCVWLV (93 aa)). The Tyr recombinase domain occupies 114–294 (RVPKALPQEW…DFDHIARLYD (181 aa)). Active-site residues include R155, K179, H246, R249, and H272. Y281 (O-(3'-phospho-DNA)-tyrosine intermediate) is an active-site residue.

It belongs to the 'phage' integrase family. XerC subfamily. As to quaternary structure, forms a cyclic heterotetrameric complex composed of two molecules of XerC and two molecules of XerD.

Its subcellular location is the cytoplasm. Its function is as follows. Site-specific tyrosine recombinase, which acts by catalyzing the cutting and rejoining of the recombining DNA molecules. The XerC-XerD complex is essential to convert dimers of the bacterial chromosome into monomers to permit their segregation at cell division. It also contributes to the segregational stability of plasmids. The chain is Tyrosine recombinase XerC from Neisseria meningitidis serogroup C (strain 053442).